The sequence spans 144 residues: Large ribosomal subunit protein uL16 (144 aa).

This sequence belongs to the universal ribosomal protein uL16 family. Part of the 50S ribosomal subunit.

Functionally, binds 23S rRNA and is also seen to make contacts with the A and possibly P site tRNAs. The sequence is that of Large ribosomal subunit protein uL16 from Levilactobacillus brevis (strain ATCC 367 / BCRC 12310 / CIP 105137 / JCM 1170 / LMG 11437 / NCIMB 947 / NCTC 947) (Lactobacillus brevis).